A 710-amino-acid polypeptide reads, in one-letter code: Protein Smaug homolog 1 (710 aa).

Disordered regions lie at residues 276-319 (ARGS…FQDE) and 441-476 (NQATESKDSASGGIQQHHIGNCESESGGVPLPESDL). Residues 309 to 318 (QSTACNTFQD) show a composition bias toward polar residues. The SAM domain occupies 319–379 (EGSGMKDVPA…KIVISIQKLK (61 aa)).

The protein belongs to the SMAUG family.

It localises to the cytoplasm. It is found in the cell projection. The protein localises to the dendrite. Its subcellular location is the synapse. The protein resides in the synaptosome. Acts as a translational repressor. This Xenopus laevis (African clawed frog) protein is Protein Smaug homolog 1 (samd4a).